Reading from the N-terminus, the 273-residue chain is Dermonecrotic toxin LafSicTox-betaIE1 (273 aa).

Residue H5 is part of the active site. Mg(2+)-binding residues include E25 and D27. The Nucleophile role is filled by H41. Cystine bridges form between C45-C51 and C47-C189. Position 85 (D85) interacts with Mg(2+). N-linked (GlcNAc...) asparagine glycosylation is present at N250.

Belongs to the arthropod phospholipase D family. Class II subfamily. Mg(2+) serves as cofactor. In terms of tissue distribution, expressed by the venom gland.

The protein localises to the secreted. It catalyses the reaction an N-(acyl)-sphingosylphosphocholine = an N-(acyl)-sphingosyl-1,3-cyclic phosphate + choline. The enzyme catalyses an N-(acyl)-sphingosylphosphoethanolamine = an N-(acyl)-sphingosyl-1,3-cyclic phosphate + ethanolamine. The catalysed reaction is a 1-acyl-sn-glycero-3-phosphocholine = a 1-acyl-sn-glycero-2,3-cyclic phosphate + choline. It carries out the reaction a 1-acyl-sn-glycero-3-phosphoethanolamine = a 1-acyl-sn-glycero-2,3-cyclic phosphate + ethanolamine. Its function is as follows. Dermonecrotic toxins cleave the phosphodiester linkage between the phosphate and headgroup of certain phospholipids (sphingolipid and lysolipid substrates), forming an alcohol (often choline) and a cyclic phosphate. This toxin acts on sphingomyelin (SM). It may also act on ceramide phosphoethanolamine (CPE), lysophosphatidylcholine (LPC) and lysophosphatidylethanolamine (LPE), but not on lysophosphatidylserine (LPS), and lysophosphatidylglycerol (LPG). It acts by transphosphatidylation, releasing exclusively cyclic phosphate products as second products. Induces dermonecrosis, hemolysis, increased vascular permeability, edema, inflammatory response, and platelet aggregation. The chain is Dermonecrotic toxin LafSicTox-betaIE1 from Loxosceles aff. spinulosa (strain GJB-2008) (Recluse spider).